Consider the following 358-residue polypeptide: Methylthioribose-1-phosphate isomerase (358 aa).

Residues 54-56 (RGA), R96, and Q205 each bind substrate. The active-site Proton donor is the D246. 256 to 257 (SK) serves as a coordination point for substrate.

The protein belongs to the eIF-2B alpha/beta/delta subunits family. MtnA subfamily.

It carries out the reaction 5-(methylsulfanyl)-alpha-D-ribose 1-phosphate = 5-(methylsulfanyl)-D-ribulose 1-phosphate. It participates in amino-acid biosynthesis; L-methionine biosynthesis via salvage pathway; L-methionine from S-methyl-5-thio-alpha-D-ribose 1-phosphate: step 1/6. Functionally, catalyzes the interconversion of methylthioribose-1-phosphate (MTR-1-P) into methylthioribulose-1-phosphate (MTRu-1-P). The sequence is that of Methylthioribose-1-phosphate isomerase from Pseudomonas putida (strain GB-1).